A 1033-amino-acid chain; its full sequence is Kinesin-like protein KIN-4A (1033 aa).

One can recognise a Kinesin motor domain in the interval 11–366 (CVKVAVHVRP…LKYANRARNI (356 aa)). 89–96 (GQTGSGKT) lines the ATP pocket. A disordered region spans residues 443 to 462 (QDGSPCSVESDGLKRNLRSR). Basic and acidic residues predominate over residues 453-462 (DGLKRNLRSR). The stretch at 525–638 (ALKQHFGKKI…IKQEAEQFRQ (114 aa)) forms a coiled coil. Residues 763–785 (DELDSKGPSPSRGKNGCARGSSL) form a disordered region. Residues 863 to 895 (IEIREMKEQLKELVGLLRQSELQRKEVENELKL) adopt a coiled-coil conformation.

It belongs to the TRAFAC class myosin-kinesin ATPase superfamily. Kinesin family. KIN-4 subfamily. As to quaternary structure, homodimer. Expressed in cotton fibers.

The protein localises to the cytoplasm. Its function is as follows. Kinesin-like motor protein involved in the control of the oriented deposition of cellulose microfibrils. This Gossypium hirsutum (Upland cotton) protein is Kinesin-like protein KIN-4A.